A 357-amino-acid chain; its full sequence is tRNA/tmRNA (uracil-C(5))-methyltransferase (357 aa).

Positions 185, 212, 217, 233, and 291 each coordinate S-adenosyl-L-methionine. Cys316 acts as the Nucleophile in catalysis. The Proton acceptor role is filled by Glu350.

The protein belongs to the class I-like SAM-binding methyltransferase superfamily. RNA M5U methyltransferase family. TrmA subfamily.

The enzyme catalyses uridine(54) in tRNA + S-adenosyl-L-methionine = 5-methyluridine(54) in tRNA + S-adenosyl-L-homocysteine + H(+). It carries out the reaction uridine(341) in tmRNA + S-adenosyl-L-methionine = 5-methyluridine(341) in tmRNA + S-adenosyl-L-homocysteine + H(+). Its function is as follows. Dual-specificity methyltransferase that catalyzes the formation of 5-methyluridine at position 54 (m5U54) in all tRNAs, and that of position 341 (m5U341) in tmRNA (transfer-mRNA). This is tRNA/tmRNA (uracil-C(5))-methyltransferase from Campylobacter hominis (strain ATCC BAA-381 / DSM 21671 / CCUG 45161 / LMG 19568 / NCTC 13146 / CH001A).